Reading from the N-terminus, the 541-residue chain is MMQHTSVWYRRSVSPFVLVASVAVFLTATANLTFFDKISQTYPIADNLGFVLTIAVVLFGAMLLITTLLSSYRYVLKPVLILLLIMGAVTSYFTDTYGTVYDTTMLQNALQTDQAETKDLLNAAFIMRIIGLGVLPSLLVAFVKVDYPTWGKGLMRRLGLIVASLALILLPVVAFSSHYASFFRVHKPLRSYVNPIMPIYSVGKLASIEYKKASAPKDTIYHAKDAVQATKPDMRKPRLVVFVVGETARADHVSFNGYERDTFPQLAKIDGVTNFSNVTSCGTSTAYSVPCMFSYLGADEYDVDTAKYQENVLDTLDRLGVSILWRDNNSDSKGVMDKLPKAQFADYKSATNNAICNTNPYNECRDVGMLVGLDDFVAANNGKDMLIMLHQMGNHGPAYFKRYDEKFAKFTPVCEGNELAKCEHQSLINAYDNALLATDDFIAQSIQWLQTHSNAYDVSMLYVSDHGESLGENGVYLHGMPNAFAPKEQRSVPAFFWTDKQTGITPMATDTVLTHDAITPTLLKLFDVTADKVKDRTAFIR.

Over 1-14 the chain is Cytoplasmic; sequence MMQHTSVWYRRSVS. A helical membrane pass occupies residues 15–35; it reads PFVLVASVAVFLTATANLTFF. Over 36-47 the chain is Periplasmic; the sequence is DKISQTYPIADN. A helical transmembrane segment spans residues 48-68; the sequence is LGFVLTIAVVLFGAMLLITTL. Residues 69–73 lie on the Cytoplasmic side of the membrane; sequence LSSYR. The helical transmembrane segment at 74–94 threads the bilayer; that stretch reads YVLKPVLILLLIMGAVTSYFT. Residues 95–122 are Periplasmic-facing; it reads DTYGTVYDTTMLQNALQTDQAETKDLLN. Residues 123-143 traverse the membrane as a helical segment; sequence AAFIMRIIGLGVLPSLLVAFV. Residues 144-157 are Cytoplasmic-facing; the sequence is KVDYPTWGKGLMRR. A helical transmembrane segment spans residues 158–178; it reads LGLIVASLALILLPVVAFSSH. The Periplasmic segment spans residues 179–541; sequence YASFFRVHKP…KVKDRTAFIR (363 aa). Zn(2+) is bound by residues Glu246 and Thr285. 3 disulfide bridges follow: Cys281-Cys291, Cys356-Cys364, and Cys414-Cys422. A Phosphothreonine modification is found at Thr285. Residues Asp465 and His466 each coordinate Zn(2+).

It belongs to the phosphoethanolamine transferase family. Monomer. Post-translationally, phosphorylated at Thr-285; may represent an intermediate in the catalytic mechanism.

Its subcellular location is the cell inner membrane. It catalyses the reaction lipid A (E. coli) + a 1,2-diacyl-sn-glycero-3-phosphoethanolamine + H(+) = lipid A 4'-(2-aminoethyl diphosphate) (E. coli) + a 1,2-diacyl-sn-glycerol. With respect to regulation, EDTA may inhibit activity. May be inhibited by ethanolamine. Probably catalyzes the addition of a phosphoethanolamine moiety to lipid A. Phosphoethanolamine modification of lipid A confers polymyxin resistance. Confers resistance to polymyxin-type antibiotics such as colistin; in the E.coli strain W3110. In Escherichia coli, this protein is Phosphatidylethanolamine transferase Mcr-1 (mcr1).